We begin with the raw amino-acid sequence, 239 residues long: Serine protease SplF (239 aa).

The first 36 residues, 1–36, serve as a signal peptide directing secretion; the sequence is MNKNIIIKSIAALTILTSITGVGTTMVEGIQQTAKA. Catalysis depends on charge relay system residues histidine 75, aspartate 114, and serine 192.

This sequence belongs to the peptidase S1B family.

The protein localises to the secreted. This Staphylococcus aureus (strain NCTC 8325 / PS 47) protein is Serine protease SplF (splF).